The chain runs to 648 residues: Zinc finger protein grt1 (648 aa).

The segment at residues 13 to 42 (ACENCRKRKVKCSGGDVCFECQKYNENCVY) is a DNA-binding region (zn(2)-C6 fungal-type).

As to quaternary structure, monomer.

It localises to the nucleus. Functionally, may be involved in the facilitation of anaphase progression in mitosis. The protein is Zinc finger protein grt1 (grt1) of Schizosaccharomyces pombe (strain 972 / ATCC 24843) (Fission yeast).